The chain runs to 482 residues: MASIPPDDDAAAAAAAGAAENGYGNGKGNGNGPAPRPPPAKRPRSVISAAQIRAEFEHHEAGVARVNNGSFGCCPSSLLDAQARWQRLFIAQPDDFYFHALQPGLRRSRAAVAGLVNAGDVAEVSLVDNATTAAAIVLQHAAWSFAEGRFSRGDAVLMLHYAYGAVKKSIHAYVARAGATVVEVPLPFPVASADAIIAEFRAALDVAKAGGRKVRLAVIDHITSMPSVVIPVKELVAICREEGVDKVFIDAAHSIGQVPVDVRDIGADFYTSNLHKWFFCPPAVAFLHTRKDDPIASQLHHPVVSHEYGNGLPMESGWIGTRDYSAQLVVPESIDFVNRFEGGIEGIRSRNHEKVIEMGKMLAEAWGTFLGTPPELCGSMVMVGLPGCLGVESDDDVMRMRTMLRKDFMVEVPIYYNSRRVEAQEMAKDKNGDAVTGYVRISHQVYNVTEDYEKLRDAVNKLVADGFTSSKLRPSQKQETMA.

Acidic residues predominate over residues 1–10 (MASIPPDDDA). Residues 1–45 (MASIPPDDDAAAAAAAGAAENGYGNGKGNGNGPAPRPPPAKRPRS) are disordered. The segment covering 11 to 22 (AAAAAAGAAENG) has biased composition (low complexity). K276 is subject to N6-(pyridoxal phosphate)lysine.

This sequence belongs to the class-V pyridoxal-phosphate-dependent aminotransferase family. Requires pyridoxal 5'-phosphate as cofactor.

It catalyses the reaction L-cysteine + H2O = hydrogen sulfide + pyruvate + NH4(+) + H(+). In terms of biological role, catalyzes the production of hydrogen sulfide (H2S) from cysteine. The sequence is that of Putative L-cysteine desulfhydrase 1 from Oryza sativa subsp. japonica (Rice).